Here is a 284-residue protein sequence, read N- to C-terminus: Avenin-like b5 (284 aa).

Positions 1–18 are cleaved as a signal peptide; sequence MKVFILALLALTATTAIA.

The protein belongs to the prolamin family. In terms of processing, contains disulfide bonds. As to expression, expressed only in developing endosperms. Not detected in roots, stems or leaves.

In terms of biological role, seed storage protein. Might be integrated via inter-chain disulfide bonds within the glutenin polymer. In Triticum aestivum (Wheat), this protein is Avenin-like b5.